Consider the following 576-residue polypeptide: uncharacterized protein (576 aa).

The disordered stretch occupies residues 41–78 (EKESESKLNSKSTTLQSSDSEDWDSEENEDDITDVGVP). Residues 49-58 (NSKSTTLQSS) are compositionally biased toward low complexity. Residues 59–73 (DSEDWDSEENEDDIT) show a composition bias toward acidic residues. WD repeat units lie at residues 87-126 (GHSK…ATNP), 195-235 (GHIA…SQLE), 248-288 (LSRI…KRPV), 296-335 (LPQQ…KCVN), and 393-433 (TVTA…RGVK). Residues 547–576 (SETQPTPIYQGVTEGDISSEEGNPSKKQKR) form a disordered region.

This is an uncharacterized protein from Schizosaccharomyces pombe (strain 972 / ATCC 24843) (Fission yeast).